The chain runs to 521 residues: Sodium/hydrogen exchanger 5 (521 aa).

The Cytoplasmic segment spans residues 1 to 23 (MEEVMISPVEHDPQGQVKQQQAA). The chain crosses the membrane as a helical span at residues 24 to 44 (GVGILLQIMMLVLSFVLGHVL). At 45 to 48 (RRHR) the chain is on the lumenal side. The helical transmembrane segment at 49-69 (FHYLPEASGSLLIGLIVGILA) threads the bilayer. Residues 70-86 (NISDTETSIRTWFNFHE) are Cytoplasmic-facing. The helical intramembrane region spans 87–107 (EFFFLFLLPPIIFQSGFSLQP). Topologically, residues 108–115 (KPFFSNFG) are cytoplasmic. A helical transmembrane segment spans residues 116–136 (AIVTFAIIGTFVASVVTGGLV). Over 137–141 (YLGGS) the chain is Lumenal. 2 intramembrane regions (helical) span residues 142–162 (MYLMYKLPFVECLMFGALISA) and 166–186 (VTVLSIFQDVGTDVNLYALVF). Topologically, residues 187–222 (GESVLNDAMAISLYRTMSLVNRQSSSGEHFFMVVIR) are lumenal. The helical transmembrane segment at 223–243 (FFETFAGSMSAGVGVGFTSAL) threads the bilayer. At 244–271 (LFKYAGLDTENLQNLECCLFVLFPYFSY) the chain is on the cytoplasmic side. A helical membrane pass occupies residues 272 to 292 (MLAEGVGLSGIVSILFTGIVM). Residues 293–310 (KRYTFSNLSEASQSFVSS) lie on the Lumenal side of the membrane. N299 is a glycosylation site (N-linked (GlcNAc...) asparagine). The helical transmembrane segment at 311 to 331 (FFHLISSLAETFTFIYMGFDI) threads the bilayer. Topologically, residues 332–340 (AMEQHSWSH) are cytoplasmic. Residues 341-361 (VGFILFSILFIGVARAVNVFG) traverse the membrane as a helical segment. Topologically, residues 362–382 (CAYLVNLFRQENQKIPMKHQK) are lumenal. Residues 383-402 (ALWYSGLRGAMAFALALQSL) form a helical membrane-spanning segment. Residues 403–411 (HDLPEGHGQ) are Cytoplasmic-facing. A helical membrane pass occupies residues 412-432 (IIFTATTTIVVVTVLLIGGST). Topologically, residues 433-521 (GKMLEALEVV…NSGDGDGDGE (89 aa)) are lumenal. A disordered region spans residues 453–480 (GFEESDHQYVPPPFSIGASSDEDTSSSG). Residues 467–480 (SIGASSDEDTSSSG) are compositionally biased toward low complexity.

The protein belongs to the monovalent cation:proton antiporter 1 (CPA1) transporter (TC 2.A.36) family. In terms of tissue distribution, expressed in roots, leaves, stems, flowers and siliques. Detected at low levels in roots and shoots.

It is found in the endosome membrane. Its subcellular location is the golgi apparatus. The protein resides in the trans-Golgi network membrane. The protein localises to the golgi stack membrane. It carries out the reaction Na(+)(in) + H(+)(out) = Na(+)(out) + H(+)(in). The catalysed reaction is K(+)(in) + H(+)(out) = K(+)(out) + H(+)(in). Involved in trafficking to the vacuole. Required for cell proliferation and cell expansion, but not for cell differentiation. Acts in low affinity electroneutral exchange of protons for cations such as Na(+) or K(+) across membranes. May also exchange Li(+) and Cs(+) with a lower affinity. This Arabidopsis thaliana (Mouse-ear cress) protein is Sodium/hydrogen exchanger 5 (NHX5).